Here is a 600-residue protein sequence, read N- to C-terminus: Elongation factor 4 (600 aa).

The tr-type G domain occupies 5–187 (KYIRNFSIVA…EIVEKVPAPE (183 aa)). Residues 17–22 (DHGKST) and 134–137 (NKVD) contribute to the GTP site.

It belongs to the TRAFAC class translation factor GTPase superfamily. Classic translation factor GTPase family. LepA subfamily.

Its subcellular location is the cell membrane. It catalyses the reaction GTP + H2O = GDP + phosphate + H(+). Functionally, required for accurate and efficient protein synthesis under certain stress conditions. May act as a fidelity factor of the translation reaction, by catalyzing a one-codon backward translocation of tRNAs on improperly translocated ribosomes. Back-translocation proceeds from a post-translocation (POST) complex to a pre-translocation (PRE) complex, thus giving elongation factor G a second chance to translocate the tRNAs correctly. Binds to ribosomes in a GTP-dependent manner. The chain is Elongation factor 4 from Clostridium perfringens (strain ATCC 13124 / DSM 756 / JCM 1290 / NCIMB 6125 / NCTC 8237 / Type A).